Reading from the N-terminus, the 358-residue chain is Chorismate synthase (358 aa).

NADP(+)-binding residues include arginine 48 and arginine 54. FMN contacts are provided by residues 125-127 (RSS), glycine 282, 297-301 (KPPAS), and arginine 323.

This sequence belongs to the chorismate synthase family. As to quaternary structure, homotetramer. The cofactor is FMNH2.

The catalysed reaction is 5-O-(1-carboxyvinyl)-3-phosphoshikimate = chorismate + phosphate. It participates in metabolic intermediate biosynthesis; chorismate biosynthesis; chorismate from D-erythrose 4-phosphate and phosphoenolpyruvate: step 7/7. Functionally, catalyzes the anti-1,4-elimination of the C-3 phosphate and the C-6 proR hydrogen from 5-enolpyruvylshikimate-3-phosphate (EPSP) to yield chorismate, which is the branch point compound that serves as the starting substrate for the three terminal pathways of aromatic amino acid biosynthesis. This reaction introduces a second double bond into the aromatic ring system. This Roseiflexus castenholzii (strain DSM 13941 / HLO8) protein is Chorismate synthase.